Consider the following 465-residue polypeptide: Cysteine--tRNA ligase (465 aa).

Cys30 serves as a coordination point for Zn(2+). The 'HIGH' region signature appears at 32 to 42 (ITVYDYCHVGH). Cys214, His239, and Glu243 together coordinate Zn(2+). Positions 271–275 (KMSKS) match the 'KMSKS' region motif. An ATP-binding site is contributed by Lys274.

The protein belongs to the class-I aminoacyl-tRNA synthetase family. Monomer. The cofactor is Zn(2+).

Its subcellular location is the cytoplasm. The catalysed reaction is tRNA(Cys) + L-cysteine + ATP = L-cysteinyl-tRNA(Cys) + AMP + diphosphate. This is Cysteine--tRNA ligase from Burkholderia cenocepacia (strain HI2424).